Consider the following 60-residue polypeptide: Putative potassium channel blocker TXKS1 (60 aa).

Residues 1–28 form the signal peptide; sequence MNRLTTIILMLIVINVIMDDISESKVAA. 3 disulfides stabilise this stretch: cysteine 32/cysteine 49, cysteine 35/cysteine 55, and cysteine 39/cysteine 57. Lysine 59 is modified (lysine amide).

Expressed by the venom gland.

Its subcellular location is the secreted. In terms of biological role, inhibits potassium channels. The protein is Putative potassium channel blocker TXKS1 of Olivierus martensii (Manchurian scorpion).